The following is a 1145-amino-acid chain: DNA polymerase II large subunit (1145 aa).

The tract at residues 284–303 is disordered; sequence KSSSESDEDEETDGKPKIKP.

This sequence belongs to the archaeal DNA polymerase II family. In terms of assembly, heterodimer of a large subunit and a small subunit.

The enzyme catalyses DNA(n) + a 2'-deoxyribonucleoside 5'-triphosphate = DNA(n+1) + diphosphate. It carries out the reaction Exonucleolytic cleavage in the 3'- to 5'-direction to yield nucleoside 5'-phosphates.. In terms of biological role, possesses two activities: a DNA synthesis (polymerase) and an exonucleolytic activity that degrades single-stranded DNA in the 3'- to 5'-direction. Has a template-primer preference which is characteristic of a replicative DNA polymerase. The polypeptide is DNA polymerase II large subunit (Methanococcoides burtonii (strain DSM 6242 / NBRC 107633 / OCM 468 / ACE-M)).